A 103-amino-acid chain; its full sequence is MSEEKPKEGVKTENDHINLKVAGQDGSVVQFKIKRHTPLSKLMKAYCERQGLSMRQIRFRFDGQPINETDTPAQLEMEDEDTIDVFQQQTGGVPESSLAGHSF.

Glycyl lysine isopeptide (Lys-Gly) (interchain with G-Cter in SUMO2) cross-links involve residues Lys5 and Lys7. Lys11 is covalently cross-linked (Glycyl lysine isopeptide (Lys-Gly) (interchain with G-Cter in SUMO); alternate). Lys11 is covalently cross-linked (Glycyl lysine isopeptide (Lys-Gly) (interchain with G-Cter in SUMO2); alternate). The 78-residue stretch at 15-92 (DHINLKVAGQ…IDVFQQQTGG (78 aa)) folds into the Ubiquitin-like domain. Gly92 is covalently cross-linked (Glycyl lysine isopeptide (Gly-Lys) (interchain with K-? in acceptor proteins)). The propeptide occupies 93 to 103 (VPESSLAGHSF).

This sequence belongs to the ubiquitin family. SUMO subfamily. As to quaternary structure, covalently attached to a number of proteins. Interacts with BMAL1. Interacts with USP25 (via ts SIM domain); the interaction sumoylates USP25 and inhibits its ubiquitin hydrolyzing activity. Interacts with SAE2 and UBE2I. Polymeric chains can be formed through Lys-11 cross-linking. In terms of processing, cleavage of precursor form by SENP1, SENP2 or SENP5 is necessary for function. In terms of tissue distribution, expressed predominantly in liver.

The protein resides in the cytoplasm. Its subcellular location is the nucleus. It localises to the PML body. Ubiquitin-like protein which can be covalently attached to target lysines either as a monomer or as a lysine-linked polymer. Does not seem to be involved in protein degradation and may function as an antagonist of ubiquitin in the degradation process. Plays a role in a number of cellular processes such as nuclear transport, DNA replication and repair, mitosis and signal transduction. Covalent attachment to its substrates requires prior activation by the E1 complex SAE1-SAE2 and linkage to the E2 enzyme UBE2I, and can be promoted by an E3 ligase such as PIAS1-4, RANBP2 or CBX4. Plays a role in the regulation of sumoylation status of SETX. This Homo sapiens (Human) protein is Small ubiquitin-related modifier 3.